The primary structure comprises 447 residues: Kynureninase (447 aa).

Residues Leu-106, Thr-107, 134–137, Asp-220, His-223, and Tyr-245 contribute to the pyridoxal 5'-phosphate site; that span reads FPSD. The residue at position 246 (Lys-246) is an N6-(pyridoxal phosphate)lysine. Pyridoxal 5'-phosphate contacts are provided by Trp-275 and Asn-303.

Belongs to the kynureninase family. In terms of assembly, homodimer. Requires pyridoxal 5'-phosphate as cofactor.

Its subcellular location is the cytoplasm. It catalyses the reaction L-kynurenine + H2O = anthranilate + L-alanine + H(+). It carries out the reaction 3-hydroxy-L-kynurenine + H2O = 3-hydroxyanthranilate + L-alanine + H(+). It participates in amino-acid degradation; L-kynurenine degradation; L-alanine and anthranilate from L-kynurenine: step 1/1. The protein operates within cofactor biosynthesis; NAD(+) biosynthesis; quinolinate from L-kynurenine: step 2/3. Functionally, catalyzes the cleavage of L-kynurenine (L-Kyn) and L-3-hydroxykynurenine (L-3OHKyn) into anthranilic acid (AA) and 3-hydroxyanthranilic acid (3-OHAA), respectively. In Eremothecium gossypii (strain ATCC 10895 / CBS 109.51 / FGSC 9923 / NRRL Y-1056) (Yeast), this protein is Kynureninase.